A 97-amino-acid chain; its full sequence is Small, acid-soluble spore protein gamma-type (97 aa).

A compositionally biased stretch (polar residues) spans 1–42 (MAKQTNKTASGTSTQHVKQQNAQASKNNFGTEFGSETNVQEV). Positions 1-97 (MAKQTNKTAS…KNQNSGKYQG (97 aa)) are disordered. Repeats lie at residues 23 to 56 (QASKNNFGTEFGSETNVQEVKQQNAQAAANKSQN) and 58 to 91 (QASKNNFGTEFASETSAQEVRQQNAQAQAKKNQN). Over residues 43 to 63 (KQQNAQAAANKSQNAQASKNN) the composition is skewed to low complexity. The span at 69–78 (ASETSAQEVR) shows a compositional bias: polar residues. Residues 79 to 91 (QQNAQAQAKKNQN) show a composition bias toward low complexity.

Belongs to the gamma-type SASP family.

Functionally, SASP are proteins degraded in the first minutes of spore germination and provide amino acids for both new protein synthesis and metabolism. These proteins may be involved in dormant spore's high resistance to UV light. In Priestia megaterium (Bacillus megaterium), this protein is Small, acid-soluble spore protein gamma-type (sasP-B).